The chain runs to 272 residues: MTSIAGPHKRLEGKVAIITGGASGIGACTAELFHENGAKVVIADIQDDLGQALATKLGGKACYIHCDVSKEDDVINLVDTTVAKYGRLDIMFNNAGIIEGQGLPVSVVESEKSDLDRLLSVNLGGAFLGAKHATRVMVQQRKGCILFTSSLCTSIAGLSGHAYAASKSGVCGLAKNLTPELGKYGIRVNCISPYGLVTGISNISEANRELVEAMLSELGTLSGQTLRADGIAKAALFLASDEAYYVSGINMVVDGGYSVVNPRLADAIYSKL.

17-41 contacts NAD(+); it reads IITGGASGIGACTAELFHENGAKVV. A substrate-binding site is contributed by Ser-150. The active-site Proton acceptor is Tyr-163.

This sequence belongs to the short-chain dehydrogenases/reductases (SDR) family.

Functionally, has no tropinone reductase activity. This is Tropinone reductase-like 1 from Erythroxylum coca (Coca plant).